A 244-amino-acid polypeptide reads, in one-letter code: Glucosamine-6-phosphate deaminase (244 aa).

Asp67 serves as the catalytic Proton acceptor; for enolization step. The active-site For ring-opening step is Asn136. His138 acts as the Proton acceptor; for ring-opening step in catalysis. Catalysis depends on Glu143, which acts as the For ring-opening step.

This sequence belongs to the glucosamine/galactosamine-6-phosphate isomerase family. NagB subfamily.

It catalyses the reaction alpha-D-glucosamine 6-phosphate + H2O = beta-D-fructose 6-phosphate + NH4(+). The protein operates within amino-sugar metabolism; N-acetylneuraminate degradation; D-fructose 6-phosphate from N-acetylneuraminate: step 5/5. Functionally, catalyzes the reversible isomerization-deamination of glucosamine 6-phosphate (GlcN6P) to form fructose 6-phosphate (Fru6P) and ammonium ion. The chain is Glucosamine-6-phosphate deaminase from Clostridium botulinum (strain Loch Maree / Type A3).